Here is a 272-residue protein sequence, read N- to C-terminus: Ethanolamine ammonia-lyase small subunit (272 aa).

Adenosylcob(III)alamin is bound by residues Val-161, Glu-182, and Cys-211.

It belongs to the EutC family. In terms of assembly, the basic unit is a heterodimer which dimerizes to form tetramers. The heterotetramers trimerize; 6 large subunits form a core ring with 6 small subunits projecting outwards. Adenosylcob(III)alamin serves as cofactor.

Its subcellular location is the bacterial microcompartment. The catalysed reaction is ethanolamine = acetaldehyde + NH4(+). The protein operates within amine and polyamine degradation; ethanolamine degradation. Catalyzes the deamination of various vicinal amino-alcohols to oxo compounds. Allows this organism to utilize ethanolamine as the sole source of nitrogen and carbon in the presence of external vitamin B12. This Xanthomonas campestris pv. campestris (strain B100) protein is Ethanolamine ammonia-lyase small subunit.